We begin with the raw amino-acid sequence, 186 residues long: Adenylate kinase (186 aa).

An ATP-binding site is contributed by 10–15 (GSGKGT). An NMP region spans residues 30-55 (ATGDVFRERMKTDMALRDIVSSGGYV). Residues T31, R36, 53-55 (GYV), 81-84 (GYPR), and Q88 contribute to the AMP site. An LID region spans residues 122–132 (ARSKESGRTDD). R123 is a binding site for ATP. Positions 129 and 140 each coordinate AMP. K168 is a binding site for ATP.

This sequence belongs to the adenylate kinase family. As to quaternary structure, monomer.

It localises to the cytoplasm. It catalyses the reaction AMP + ATP = 2 ADP. It participates in purine metabolism; AMP biosynthesis via salvage pathway; AMP from ADP: step 1/1. Catalyzes the reversible transfer of the terminal phosphate group between ATP and AMP. Plays an important role in cellular energy homeostasis and in adenine nucleotide metabolism. The polypeptide is Adenylate kinase (Tropheryma whipplei (strain TW08/27) (Whipple's bacillus)).